A 394-amino-acid polypeptide reads, in one-letter code: Flap endonuclease 1 (394 aa).

Residues 1 to 103 (MGIKSLYQII…GELAKRTMRK (103 aa)) form an N-domain region. Asp34 lines the Mg(2+) pocket. Arg69 is a binding site for DNA. Asp85 provides a ligand contact to Mg(2+). The tract at residues 102–123 (RKAEAQEAAEEAKETGTAEDVE) is disordered. The tract at residues 121 to 252 (DVEKFSRRTV…NTALKMIRDH (132 aa)) is I-domain. Mg(2+) is bound by residues Glu157, Glu159, Asp178, and Asp180. DNA is bound at residue Glu157. Residues Gly230 and Asp232 each contribute to the DNA site. Mg(2+) is bound at residue Asp232. The segment at 340–348 (QQSRLEGFF) is interaction with PCNA. The tract at residues 349 to 394 (KPVAKTEQQKATAKRKAEEKAELAKKKKKEDAKAKRAMGAKPRGAR) is disordered. Basic and acidic residues predominate over residues 363 to 382 (RKAEEKAELAKKKKKEDAKA). Positions 383 to 394 (KRAMGAKPRGAR) are enriched in basic residues.

It belongs to the XPG/RAD2 endonuclease family. FEN1 subfamily. In terms of assembly, interacts with PCNA. Three molecules of FEN1 bind to one PCNA trimer with each molecule binding to one PCNA monomer. PCNA stimulates the nuclease activity without altering cleavage specificity. Mg(2+) is required as a cofactor. Phosphorylated. Phosphorylation upon DNA damage induces relocalization to the nuclear plasma.

It is found in the nucleus. The protein resides in the nucleolus. The protein localises to the nucleoplasm. Its subcellular location is the mitochondrion. In terms of biological role, structure-specific nuclease with 5'-flap endonuclease and 5'-3' exonuclease activities involved in DNA replication and repair. During DNA replication, cleaves the 5'-overhanging flap structure that is generated by displacement synthesis when DNA polymerase encounters the 5'-end of a downstream Okazaki fragment. It enters the flap from the 5'-end and then tracks to cleave the flap base, leaving a nick for ligation. Also involved in the long patch base excision repair (LP-BER) pathway, by cleaving within the apurinic/apyrimidinic (AP) site-terminated flap. Acts as a genome stabilization factor that prevents flaps from equilibrating into structures that lead to duplications and deletions. Also possesses 5'-3' exonuclease activity on nicked or gapped double-stranded DNA, and exhibits RNase H activity. Also involved in replication and repair of rDNA and in repairing mitochondrial DNA. This Arthroderma otae (strain ATCC MYA-4605 / CBS 113480) (Microsporum canis) protein is Flap endonuclease 1.